Consider the following 359-residue polypeptide: UPF0283 membrane protein R01807 (359 aa).

The next 2 membrane-spanning stretches (helical) occupy residues 76-96 (FGKI…GLWI) and 109-129 (WLGY…LIVV).

It belongs to the UPF0283 family.

It is found in the cell inner membrane. The sequence is that of UPF0283 membrane protein R01807 from Rhizobium meliloti (strain 1021) (Ensifer meliloti).